The following is a 113-amino-acid chain: uncharacterized protein (113 aa).

The first 20 residues, methionine 1–alanine 20, serve as a signal peptide directing secretion.

This is an uncharacterized protein from Escherichia coli (strain K12).